A 451-amino-acid polypeptide reads, in one-letter code: UPF0210 protein NMB1652 (451 aa).

The protein belongs to the UPF0210 family. In terms of assembly, homodimer.

In Neisseria meningitidis serogroup B (strain ATCC BAA-335 / MC58), this protein is UPF0210 protein NMB1652.